Reading from the N-terminus, the 333-residue chain is Glycerol-3-phosphate dehydrogenase [NAD(P)+] (333 aa).

NADPH contacts are provided by Trp-11, Arg-30, and Lys-105. Sn-glycerol 3-phosphate contacts are provided by Lys-105, Gly-133, and Ser-135. Ala-137 contacts NADPH. Lys-188, Asp-241, Ser-251, Arg-252, and Asn-253 together coordinate sn-glycerol 3-phosphate. Residue Lys-188 is the Proton acceptor of the active site. Arg-252 provides a ligand contact to NADPH. 2 residues coordinate NADPH: Val-276 and Glu-278.

The protein belongs to the NAD-dependent glycerol-3-phosphate dehydrogenase family.

It is found in the cytoplasm. It catalyses the reaction sn-glycerol 3-phosphate + NAD(+) = dihydroxyacetone phosphate + NADH + H(+). The catalysed reaction is sn-glycerol 3-phosphate + NADP(+) = dihydroxyacetone phosphate + NADPH + H(+). It participates in membrane lipid metabolism; glycerophospholipid metabolism. Its function is as follows. Catalyzes the reduction of the glycolytic intermediate dihydroxyacetone phosphate (DHAP) to sn-glycerol 3-phosphate (G3P), the key precursor for phospholipid synthesis. The polypeptide is Glycerol-3-phosphate dehydrogenase [NAD(P)+] (Methylibium petroleiphilum (strain ATCC BAA-1232 / LMG 22953 / PM1)).